The primary structure comprises 339 residues: Anthranilate phosphoribosyltransferase (339 aa).

5-phospho-alpha-D-ribose 1-diphosphate-binding positions include G79, 82–83, T87, 89–92, 107–115, and S119; these read GD, NIST, and KHGNRAVSS. Residue G79 coordinates anthranilate. Residue S91 coordinates Mg(2+). N110 contributes to the anthranilate binding site. Residue R165 coordinates anthranilate. Mg(2+) is bound by residues D224 and E225.

This sequence belongs to the anthranilate phosphoribosyltransferase family. As to quaternary structure, homodimer. It depends on Mg(2+) as a cofactor.

It carries out the reaction N-(5-phospho-beta-D-ribosyl)anthranilate + diphosphate = 5-phospho-alpha-D-ribose 1-diphosphate + anthranilate. The protein operates within amino-acid biosynthesis; L-tryptophan biosynthesis; L-tryptophan from chorismate: step 2/5. Catalyzes the transfer of the phosphoribosyl group of 5-phosphorylribose-1-pyrophosphate (PRPP) to anthranilate to yield N-(5'-phosphoribosyl)-anthranilate (PRA). The sequence is that of Anthranilate phosphoribosyltransferase from Geobacillus sp. (strain WCH70).